A 362-amino-acid chain; its full sequence is Chalcone synthase A (362 aa).

Residue C168 is part of the active site.

This sequence belongs to the thiolase-like superfamily. Chalcone/stilbene synthases family.

The enzyme catalyses (E)-4-coumaroyl-CoA + 3 malonyl-CoA + 3 H(+) = 2',4,4',6'-tetrahydroxychalcone + 3 CO2 + 4 CoA. The protein operates within secondary metabolite biosynthesis; flavonoid biosynthesis. The primary product of this enzyme is 4,2',4',6'-tetrahydroxychalcone (also termed naringenin-chalcone or chalcone) which can under specific conditions spontaneously isomerize into naringenin. This is Chalcone synthase A (CHSA) from Ipomoea trifida (Morning glory).